The primary structure comprises 312 residues: tRNA dimethylallyltransferase (312 aa).

11 to 18 (GPTAAGKS) lines the ATP pocket. A substrate-binding site is contributed by 13-18 (TAAGKS). 3 interaction with substrate tRNA regions span residues 36–39 (DSAT), 160–164 (QRIQR), and 243–248 (RCVGYR).

Belongs to the IPP transferase family. As to quaternary structure, monomer. Mg(2+) is required as a cofactor.

The catalysed reaction is adenosine(37) in tRNA + dimethylallyl diphosphate = N(6)-dimethylallyladenosine(37) in tRNA + diphosphate. In terms of biological role, catalyzes the transfer of a dimethylallyl group onto the adenine at position 37 in tRNAs that read codons beginning with uridine, leading to the formation of N6-(dimethylallyl)adenosine (i(6)A). This chain is tRNA dimethylallyltransferase, found in Bordetella avium (strain 197N).